Consider the following 385-residue polypeptide: Deoxyguanosinetriphosphate triphosphohydrolase-like protein (385 aa).

In terms of domain architecture, HD spans 75 to 197 (RLTHTLEVGQ…VDAADALAYT (123 aa)).

It belongs to the dGTPase family. Type 2 subfamily.

This is Deoxyguanosinetriphosphate triphosphohydrolase-like protein from Deinococcus geothermalis (strain DSM 11300 / CIP 105573 / AG-3a).